The following is a 212-amino-acid chain: Ras-related protein Rab-15 (212 aa).

Residues S17, G18, V19, G20, K21, T22, C23, S35, S39, and T40 each coordinate GTP. T22 is a binding site for Mg(2+). 2 short sequence motifs (switch) span residues 31–45 and 63–80; these read NEFHSSHISTIGVDF and DTAGQERYQTITKQYYRR. T40 and D63 together coordinate Mg(2+). 6 residues coordinate GTP: G66, N121, K122, D124, S151, and A152. S-geranylgeranyl cysteine attachment occurs at residues C210 and C212. At C212 the chain carries Cysteine methyl ester.

This sequence belongs to the small GTPase superfamily. Rab family. The GTP bound form of RAB15 interacts with REP15. Interacts (GTP-bound form) with MICAL1, MICAL3, MICALCL, EHBP1 and EHBP1L1. The cofactor is Mg(2+). In terms of tissue distribution, expressed predominantly in neural tissues.

The protein resides in the cell membrane. It carries out the reaction GTP + H2O = GDP + phosphate + H(+). Its activity is regulated as follows. Regulated by guanine nucleotide exchange factors (GEFs) which promote the exchange of bound GDP for free GTP. Regulated by GTPase activating proteins (GAPs) which increase the GTP hydrolysis activity. Inhibited by GDP dissociation inhibitors (GDIs). The small GTPases Rab are key regulators of intracellular membrane trafficking, from the formation of transport vesicles to their fusion with membranes. Rabs cycle between an inactive GDP-bound form and an active GTP-bound form that is able to recruit to membranes different sets of downstream effectors directly responsible for vesicle formation, movement, tethering and fusion. RAB15 may act in concert with RAB3A in regulating aspects of synaptic vesicle membrane flow within the nerve terminal. The chain is Ras-related protein Rab-15 from Rattus norvegicus (Rat).